We begin with the raw amino-acid sequence, 198 residues long: Large ribosomal subunit protein bL25 (198 aa).

This sequence belongs to the bacterial ribosomal protein bL25 family. CTC subfamily. Part of the 50S ribosomal subunit; part of the 5S rRNA/L5/L18/L25 subcomplex. Contacts the 5S rRNA. Binds to the 5S rRNA independently of L5 and L18.

Functionally, this is one of the proteins that binds to the 5S RNA in the ribosome where it forms part of the central protuberance. The protein is Large ribosomal subunit protein bL25 of Phocaeicola vulgatus (strain ATCC 8482 / DSM 1447 / JCM 5826 / CCUG 4940 / NBRC 14291 / NCTC 11154) (Bacteroides vulgatus).